The sequence spans 311 residues: 4-hydroxy-tetrahydrodipicolinate synthase (311 aa).

Threonine 51 contributes to the pyruvate binding site. The active-site Proton donor/acceptor is tyrosine 140. The Schiff-base intermediate with substrate role is filled by lysine 168. Position 209 (isoleucine 209) interacts with pyruvate.

This sequence belongs to the DapA family. In terms of assembly, homotetramer; dimer of dimers.

It is found in the cytoplasm. The enzyme catalyses L-aspartate 4-semialdehyde + pyruvate = (2S,4S)-4-hydroxy-2,3,4,5-tetrahydrodipicolinate + H2O + H(+). The protein operates within amino-acid biosynthesis; L-lysine biosynthesis via DAP pathway; (S)-tetrahydrodipicolinate from L-aspartate: step 3/4. In terms of biological role, catalyzes the condensation of (S)-aspartate-beta-semialdehyde [(S)-ASA] and pyruvate to 4-hydroxy-tetrahydrodipicolinate (HTPA). This chain is 4-hydroxy-tetrahydrodipicolinate synthase, found in Streptococcus pneumoniae (strain ATCC BAA-255 / R6).